Reading from the N-terminus, the 128-residue chain is Aspartate 1-decarboxylase (128 aa).

The active-site Schiff-base intermediate with substrate; via pyruvic acid is the Ser-25. Residue Ser-25 is modified to Pyruvic acid (Ser). Substrate is bound at residue Thr-57. Catalysis depends on Tyr-58, which acts as the Proton donor. 73-75 (GAA) lines the substrate pocket.

Belongs to the PanD family. In terms of assembly, heterooctamer of four alpha and four beta subunits. The cofactor is pyruvate. Is synthesized initially as an inactive proenzyme, which is activated by self-cleavage at a specific serine bond to produce a beta-subunit with a hydroxyl group at its C-terminus and an alpha-subunit with a pyruvoyl group at its N-terminus.

The protein localises to the cytoplasm. The enzyme catalyses L-aspartate + H(+) = beta-alanine + CO2. The protein operates within cofactor biosynthesis; (R)-pantothenate biosynthesis; beta-alanine from L-aspartate: step 1/1. Catalyzes the pyruvoyl-dependent decarboxylation of aspartate to produce beta-alanine. The chain is Aspartate 1-decarboxylase from Caldicellulosiruptor saccharolyticus (strain ATCC 43494 / DSM 8903 / Tp8T 6331).